The primary structure comprises 306 residues: UDP-N-acetylenolpyruvoylglucosamine reductase (306 aa).

Residues 34 to 198 (VGGPADLLIT…LEVTFKLHNS (165 aa)) form the FAD-binding PCMH-type domain. Arg-177 is a catalytic residue. Ser-227 (proton donor) is an active-site residue. Glu-297 is an active-site residue.

Belongs to the MurB family. Requires FAD as cofactor.

Its subcellular location is the cytoplasm. The enzyme catalyses UDP-N-acetyl-alpha-D-muramate + NADP(+) = UDP-N-acetyl-3-O-(1-carboxyvinyl)-alpha-D-glucosamine + NADPH + H(+). It participates in cell wall biogenesis; peptidoglycan biosynthesis. In terms of biological role, cell wall formation. This chain is UDP-N-acetylenolpyruvoylglucosamine reductase, found in Clostridium botulinum (strain Langeland / NCTC 10281 / Type F).